The sequence spans 428 residues: Trigger factor (428 aa).

Residues 163-248 form the PPIase FKBP-type domain; sequence GNIAVIDFKG…VKEIKVKELP (86 aa).

It belongs to the FKBP-type PPIase family. Tig subfamily.

It is found in the cytoplasm. It carries out the reaction [protein]-peptidylproline (omega=180) = [protein]-peptidylproline (omega=0). Functionally, involved in protein export. Acts as a chaperone by maintaining the newly synthesized protein in an open conformation. Functions as a peptidyl-prolyl cis-trans isomerase. This Clostridium perfringens (strain ATCC 13124 / DSM 756 / JCM 1290 / NCIMB 6125 / NCTC 8237 / Type A) protein is Trigger factor.